Reading from the N-terminus, the 426-residue chain is Glutamate-1-semialdehyde 2,1-aminomutase (426 aa).

Position 265 is an N6-(pyridoxal phosphate)lysine (K265).

This sequence belongs to the class-III pyridoxal-phosphate-dependent aminotransferase family. HemL subfamily. In terms of assembly, homodimer. Requires pyridoxal 5'-phosphate as cofactor.

The protein resides in the cytoplasm. The catalysed reaction is (S)-4-amino-5-oxopentanoate = 5-aminolevulinate. It participates in porphyrin-containing compound metabolism; protoporphyrin-IX biosynthesis; 5-aminolevulinate from L-glutamyl-tRNA(Glu): step 2/2. The polypeptide is Glutamate-1-semialdehyde 2,1-aminomutase (Shigella boydii serotype 4 (strain Sb227)).